The primary structure comprises 54 residues: Ribulose bisphosphate carboxylase large chain (54 aa).

Residues 1–2 (MS) constitute a propeptide that is removed on maturation. At Pro-3 the chain carries N-acetylproline. Lys-14 carries the N6,N6,N6-trimethyllysine modification.

It belongs to the RuBisCO large chain family. Type I subfamily. Heterohexadecamer of 8 large chains and 8 small chains.

Its subcellular location is the plastid. The protein localises to the chloroplast. It carries out the reaction 2 (2R)-3-phosphoglycerate + 2 H(+) = D-ribulose 1,5-bisphosphate + CO2 + H2O. It catalyses the reaction D-ribulose 1,5-bisphosphate + O2 = 2-phosphoglycolate + (2R)-3-phosphoglycerate + 2 H(+). RuBisCO catalyzes two reactions: the carboxylation of D-ribulose 1,5-bisphosphate, the primary event in carbon dioxide fixation, as well as the oxidative fragmentation of the pentose substrate in the photorespiration process. Both reactions occur simultaneously and in competition at the same active site. This is Ribulose bisphosphate carboxylase large chain (rbcL) from Geum borisii (Avens).